The following is a 421-amino-acid chain: Chitin deacetylase (421 aa).

An N-terminal signal peptide occupies residues 1–21 (MQIKTFALSAAIAQVATLALA). Asparagine 39, asparagine 70, asparagine 87, and asparagine 106 each carry an N-linked (GlcNAc...) asparagine glycan. The NodB homology domain maps to 157 to 349 (ETWGLTYDDG…YKQVIDVATC (193 aa)). Aspartate 164 (proton acceptor) is an active-site residue. An acetate-binding site is contributed by aspartate 164. Aspartate 165 is a binding site for Co(2+). N-linked (GlcNAc...) asparagine glycosylation is present at asparagine 168. Co(2+) contacts are provided by histidine 214 and histidine 218. Residue tyrosine 255 coordinates acetate. Asparagine 307 is a glycosylation site (N-linked (GlcNAc...) asparagine). The active-site Proton donor is the histidine 320. N-linked (GlcNAc...) asparagine glycans are attached at residues asparagine 323, asparagine 351, and asparagine 367. The GPI-anchor amidated threonine moiety is linked to residue threonine 390. A propeptide spans 391–421 (AAAHIQASTSGAMSVLPNLALISAFIATLLF) (removed in mature form).

This sequence belongs to the polysaccharide deacetylase family. Co(2+) serves as cofactor.

The protein localises to the secreted. It is found in the cell wall. The protein resides in the cell membrane. It carries out the reaction [(1-&gt;4)-N-acetyl-beta-D-glucosaminyl](n) + n H2O = chitosan + n acetate. In terms of biological role, hydrolyzes the N-acetamido groups of N-acetyl-D-glucosamine residues in chitin to form chitosan and acetate. This Amylomyces rouxii (Filamentous fungus) protein is Chitin deacetylase.